The following is a 206-amino-acid chain: Flavin reductase (NADPH) (206 aa).

NADP(+)-binding residues include Gly-10, Thr-12, Gly-13, Gln-14, Thr-15, Arg-35, Ser-38, and Arg-39. The residue at position 42 (Ser-42) is a Phosphoserine. Residues Asp-54, Val-55, Leu-75, Gly-76, and Arg-78 each coordinate NADP(+). The residue at position 82 (Ser-82) is a Phosphoserine. Residues Met-87, Cys-109, His-132, His-153, and Ile-154 each coordinate NADP(+). Cys-109 acts as the S-nitroso-cysteine intermediate; for S-nitroso-CoA-dependent nitrosyltransferase activity in catalysis. The active-site S-nitroso-cysteine intermediate; for S-nitroso-CoA-dependent nitrosyltransferase activity is the Cys-188.

It belongs to the BLVRB family. As to quaternary structure, monomer. As to expression, predominantly expressed in liver and erythrocytes. At lower levels in heart, lung, adrenal gland and cerebrum. Expressed in adult red blood cells.

The protein resides in the cytoplasm. It carries out the reaction reduced riboflavin + NADP(+) = riboflavin + NADPH + 2 H(+). The enzyme catalyses bilirubin IXbeta + NADP(+) = biliverdin IXbeta + NADPH + H(+). The catalysed reaction is FMNH2 + NAD(+) = FMN + NADH + 2 H(+). It catalyses the reaction FMNH2 + NADP(+) = FMN + NADPH + 2 H(+). It carries out the reaction S-nitroso-CoA + L-cysteinyl-[protein] = S-nitroso-L-cysteinyl-[protein] + CoA. The enzyme catalyses L-cysteinyl-[SCAN] + S-nitroso-CoA = S-nitroso-L-cysteinyl-[SCAN] + CoA. The catalysed reaction is S-nitroso-L-cysteinyl-[SCAN] + L-cysteinyl-[protein] = L-cysteinyl-[SCAN] + S-nitroso-L-cysteinyl-[protein]. Its activity is regulated as follows. Mesobiliverdin acts as a competitive inhibitor for flavin reduction, indicating that flavin and tetrapyrrole substrates compete for the same site. Inhibited by a wide range of xanthene-based drugs, such as phloxine B, erythrosin B, tamibarotene, sulfasalazine, olsalazine, febuxostat, ataluren (PTC124) and deferasirox. Enzyme that can both act as a NAD(P)H-dependent reductase and a S-nitroso-CoA-dependent nitrosyltransferase. Promotes fetal heme degradation during development. Also expressed in adult tissues, where it acts as a regulator of hematopoiesis, intermediary metabolism (glutaminolysis, glycolysis, TCA cycle and pentose phosphate pathway) and insulin signaling. Has a broad specificity oxidoreductase activity by catalyzing the NAD(P)H-dependent reduction of a variety of flavins, such as riboflavin, FAD or FMN, biliverdins, methemoglobin and PQQ (pyrroloquinoline quinone). Contributes to fetal heme catabolism by catalyzing reduction of biliverdin IXbeta into bilirubin IXbeta in the liver. Biliverdin IXbeta, which constitutes the major heme catabolite in the fetus is not present in adult. Does not reduce bilirubin IXalpha. Can also reduce the complexed Fe(3+) iron to Fe(2+) in the presence of FMN and NADPH. Acts as a protein nitrosyltransferase by catalyzing nitrosylation of cysteine residues of target proteins, such as HMOX2, INSR and IRS1. S-nitroso-CoA-dependent nitrosyltransferase activity is mediated via a 'ping-pong' mechanism: BLVRB first associates with both S-nitroso-CoA and protein substrate, nitric oxide group is then transferred from S-nitroso-CoA to Cys-109 and Cys-188 residues of BLVRB and from S-nitroso-BLVRB to the protein substrate. Inhibits insulin signaling by mediating nitrosylation of INSR and IRS1, leading to their inhibition. In Homo sapiens (Human), this protein is Flavin reductase (NADPH).